A 487-amino-acid polypeptide reads, in one-letter code: b(0,+)-type amino acid transporter 1 (487 aa).

Basic and acidic residues predominate over residues 1–20; it reads MEETSPRRRREDEKSVHSTE. The disordered stretch occupies residues 1 to 23; the sequence is MEETSPRRRREDEKSVHSTEPKT. The Cytoplasmic portion of the chain corresponds to 1–31; the sequence is MEETSPRRRREDEKSVHSTEPKTTSLQKEVG. Ser-18 bears the Phosphoserine mark. The helical transmembrane segment at 32–55 threads the bilayer; it reads LLSGICIIVGTIIGSGIFISPKSV. 43–47 contacts L-arginine; that stretch reads IIGSG. Over 56 to 62 the chain is Extracellular; that stretch reads LANTESV. Residues 63 to 84 traverse the membrane as a helical segment; it reads GPCLIIWAACGVLATLGALCFA. Topologically, residues 85-110 are cytoplasmic; that stretch reads ELGTMITKSGGEYPYLMEAFGPIPAY. Residues 111 to 137 traverse the membrane as a helical segment; the sequence is LFSWTSLIVMKPSSFAIICLSFSEYVC. Residues 138-147 lie on the Extracellular side of the membrane; that stretch reads AAFYLGCRPP. The next 2 helical transmembrane spans lie at 148-169 and 170-193; these read AVVVKLLAAAAILLITTVNALS and VRLGSYVQNVFTAAKLVIVAIIII. Residues 194-217 lie on the Extracellular side of the membrane; sequence SGLVLLAQGNVKNFQNSFEGSQTS. The helical transmembrane segment at 218-238 threads the bilayer; sequence VGSISLAFYNGLWAYDGWNQL. L-arginine is bound at residue Asp-233. At 239–251 the chain is on the cytoplasmic side; sequence NYITEELRNPYRN. Residues 252–274 traverse the membrane as a helical segment; that stretch reads LPMAIVIGIPLVTVCYILMNIAY. Topologically, residues 275-302 are extracellular; it reads FTVMTPTELLQSQAVAVTFGDRVLYPAS. Residues 303–325 form a helical membrane-spanning segment; that stretch reads WVVPLFVAFSTIGAANGTCFTAG. Over 326–351 the chain is Cytoplasmic; that stretch reads RLIYVAGREGHMLKVLSYISVKRLTP. 2 helical membrane-spanning segments follow: residues 352-370 and 371-391; these read APALVFYGIIAIIYIIPGD and INSLVNYFSFAAWLFYGMTIL. Residues 392-410 lie on the Cytoplasmic side of the membrane; sequence GLVVMRFTRKDLERPIKVP. The chain crosses the membrane as a helical span at residues 411-431; that stretch reads IFIPIIVILVSVFLILAPIIS. Over 432–434 the chain is Extracellular; it reads SPA. A helical membrane pass occupies residues 435–450; sequence WEYLYCVLFILSGLIF. The Cytoplasmic portion of the chain corresponds to 451 to 487; that stretch reads YFLFVHYKFRWAQKISRPITKHLQMLMEVVPPEKDPE.

The protein belongs to the amino acid-polyamine-organocation (APC) superfamily. Disulfide-linked heterodimer composed of the catalytic light chain subunit SLC7A9 and the heavy chain subunit SLC3A1. The heterodimer is the minimal functional unit. Assembles in heterotetramers (dimers of heterodimers) and higher order oligomers; the oligomerization is mediated by SLC3A1 likely to prevent degradation and facilitate heteromer trafficking to the plasma membrane. Interacts with CAV1. In terms of tissue distribution, outer medulla of kidney (at protein level). Kidney and small intestine. In the kidney localized to the apical membrane of the proximal tubules.

The protein resides in the apical cell membrane. It carries out the reaction L-leucine(out) + L-arginine(in) = L-leucine(in) + L-arginine(out). The enzyme catalyses L-histidine(out) + L-arginine(in) = L-histidine(in) + L-arginine(out). The catalysed reaction is L-arginine(in) + L-phenylalanine(out) = L-arginine(out) + L-phenylalanine(in). It catalyses the reaction L-cysteine(out) + L-arginine(in) = L-cysteine(in) + L-arginine(out). It carries out the reaction L-cystine(out) + L-arginine(in) = L-cystine(in) + L-arginine(out). The enzyme catalyses L-lysine(out) + L-arginine(in) = L-lysine(in) + L-arginine(out). Functionally, associates with SLC3A1 to form a functional transporter complex that mediates the electrogenic exchange between cationic amino acids and neutral amino acids, with a stoichiometry of 1:1. Has system b(0,+)-like activity with high affinity for extracellular cationic amino acids and L-cystine and lower affinity for intracellular neutral amino acids. Substrate exchange is driven by high concentration of intracellular neutral amino acids and the intracellular reduction of L-cystine to L-cysteine. Required for reabsorption of L-cystine and dibasic amino acids across the brush border membrane in renal proximal tubules. This is b(0,+)-type amino acid transporter 1 (Slc7a9) from Rattus norvegicus (Rat).